The primary structure comprises 241 residues: MFARGLKRKCVGHEEDVEGALAGLKTVSSYSLQRQSLLDMSLVKLQLCHMLVEPNLCRSVLIANTVRQIQEEMTQDGTWRTVAPQAAERAPLDRLVSTEILCRAAWGQEGAHPAPGLGDGHTQGPVSDLCPVTSAQAPRHLQSSAWEMDGPRENRGSFHKSLDQIFETLETKNPSCMEELFSDVDSPYYDLDTVLTGMMGGARPGPCEGLEGLAPATPGPSSSCKSDLGELDHVVEILVET.

The 48-residue stretch at 30–77 (YSLQRQSLLDMSLVKLQLCHMLVEPNLCRSVLIANTVRQIQEEMTQDG) folds into the SERTA domain.

As to expression, highest levels of expression in the pancreas, thymus, testis, spleen, liver, placenta and leukocytes. Relatively low levels in the lung, kidney, prostate, ovary, small intestine and colon. Hardly detectable, if at all, in the brain, skeletal muscle and heart.

The protein resides in the nucleus. Functionally, may participate in the regulation of cell proliferation through the E2F/RB pathway. May be involved in molecular regulation of hematopoietic stem cells and progenitor cell lineage commitment and differentiation. This chain is Cell division cycle-associated protein 4 (CDCA4), found in Homo sapiens (Human).